The sequence spans 184 residues: NADH-quinone oxidoreductase subunit B 2 (184 aa).

Cys59, Cys60, Cys125, and Cys153 together coordinate [4Fe-4S] cluster.

It belongs to the complex I 20 kDa subunit family. As to quaternary structure, NDH-1 is composed of 14 different subunits. Subunits NuoB, C, D, E, F, and G constitute the peripheral sector of the complex. [4Fe-4S] cluster serves as cofactor.

It localises to the cell inner membrane. The catalysed reaction is a quinone + NADH + 5 H(+)(in) = a quinol + NAD(+) + 4 H(+)(out). NDH-1 shuttles electrons from NADH, via FMN and iron-sulfur (Fe-S) centers, to quinones in the respiratory chain. Couples the redox reaction to proton translocation (for every two electrons transferred, four hydrogen ions are translocated across the cytoplasmic membrane), and thus conserves the redox energy in a proton gradient. The polypeptide is NADH-quinone oxidoreductase subunit B 2 (Solibacter usitatus (strain Ellin6076)).